Here is a 205-residue protein sequence, read N- to C-terminus: CASP-like protein 2A1 (205 aa).

At 1 to 35 (MMGDKGEKECATASSPIELGCGEGDESGNKSSMRT) the chain is on the cytoplasmic side. A helical transmembrane segment spans residues 36 to 56 (VETLLRLVPVALCTVSLVVML). Over 57–77 (KNSQTNDFGSLSYSDLGAFRY) the chain is Extracellular. A helical transmembrane segment spans residues 78–98 (LVHANGICAGYSLLSAIFTAM). The Cytoplasmic portion of the chain corresponds to 99 to 106 (PRPPTMSR). Residues 107-127 (AWTFFLLDQVLTYLILAAGAV) traverse the membrane as a helical segment. Residues 128–157 (STEVVYLAYKGDEAVTWSDACSSFGGFCQK) lie on the Extracellular side of the membrane. Residues 158-178 (TTASISITFVTVLCYAVLSLI) form a helical membrane-spanning segment. The Cytoplasmic segment spans residues 179-205 (SSYKLFSKYDAPICFNGKGIEIAAFHS).

The protein belongs to the Casparian strip membrane proteins (CASP) family. In terms of assembly, homodimer and heterodimers.

The protein localises to the cell membrane. This Vitis vinifera (Grape) protein is CASP-like protein 2A1.